The sequence spans 484 residues: Glycogen synthase (484 aa).

Residue Lys-15 participates in ADP-alpha-D-glucose binding.

It belongs to the glycosyltransferase 1 family. Bacterial/plant glycogen synthase subfamily.

The enzyme catalyses [(1-&gt;4)-alpha-D-glucosyl](n) + ADP-alpha-D-glucose = [(1-&gt;4)-alpha-D-glucosyl](n+1) + ADP + H(+). The protein operates within glycan biosynthesis; glycogen biosynthesis. Its function is as follows. Synthesizes alpha-1,4-glucan chains using ADP-glucose. The polypeptide is Glycogen synthase (Koribacter versatilis (strain Ellin345)).